The chain runs to 109 residues: uncharacterized protein (109 aa).

This is an uncharacterized protein from Saccharomyces cerevisiae (strain ATCC 204508 / S288c) (Baker's yeast).